The following is a 648-amino-acid chain: Threonine--tRNA ligase (648 aa).

Residues 1–62 enclose the TGS domain; the sequence is MVEIILPDGS…PHGAQVAIIT (62 aa). The segment at 243–536 is catalytic; it reads DHRRIGKDLD…LVEHYAGWFP (294 aa). Residues Cys-336, His-387, and His-513 each contribute to the Zn(2+) site.

Belongs to the class-II aminoacyl-tRNA synthetase family. In terms of assembly, homodimer. It depends on Zn(2+) as a cofactor.

The protein localises to the cytoplasm. It carries out the reaction tRNA(Thr) + L-threonine + ATP = L-threonyl-tRNA(Thr) + AMP + diphosphate + H(+). Catalyzes the attachment of threonine to tRNA(Thr) in a two-step reaction: L-threonine is first activated by ATP to form Thr-AMP and then transferred to the acceptor end of tRNA(Thr). Also edits incorrectly charged L-seryl-tRNA(Thr). The sequence is that of Threonine--tRNA ligase from Magnetococcus marinus (strain ATCC BAA-1437 / JCM 17883 / MC-1).